We begin with the raw amino-acid sequence, 123 residues long: Secreted RxLR effector protein RXLR-C21 (123 aa).

The first 23 residues, 1-23 (MRLHLLVLSVIVVSLLVSDNAHA), serve as a signal peptide directing secretion. The RxLR-dEER motif lies at 32 to 65 (RALRETPINGLVTNQLAVSRNLTPAKFITNSEER). Residues 101–121 (VTTICSIVLFVMVFGCLYKIF) traverse the membrane as a helical segment.

The protein belongs to the RxLR effector family.

It localises to the secreted. The protein resides in the host endoplasmic reticulum membrane. Its function is as follows. Secreted effector that does not suppress pattern-triggered immunity (PTI) in plant host. This chain is Secreted RxLR effector protein RXLR-C21, found in Plasmopara halstedii (Downy mildew of sunflower).